Consider the following 147-residue polypeptide: Nudix hydrolase 1 (147 aa).

Ser-2 is modified (N-acetylserine). The 134-residue stretch at 7 to 140 folds into the Nudix hydrolase domain; it reads IPRVAVVVFI…EKLFGSGFNP (134 aa). Residues 41-62 carry the Nudix box motif; sequence GHLEFGESFEECAAREVMEETG. Residues Glu-56 and Glu-60 each coordinate Mg(2+).

Belongs to the Nudix hydrolase family. As to quaternary structure, homodimer. It depends on Mg(2+) as a cofactor. Mn(2+) serves as cofactor. In terms of tissue distribution, expressed in roots, stems and leaves.

The protein resides in the cytoplasm. The catalysed reaction is 7,8-dihydroneopterin 3'-triphosphate + H2O = 7,8-dihydroneopterin 3'-phosphate + diphosphate + H(+). It carries out the reaction NAD(+) + H2O = beta-nicotinamide D-ribonucleotide + AMP + 2 H(+). The enzyme catalyses NADH + H2O = reduced beta-nicotinamide D-ribonucleotide + AMP + 2 H(+). It catalyses the reaction 8-oxo-dGTP + H2O = 8-oxo-dGMP + diphosphate + H(+). Mediates the hydrolysis of some nucleoside diphosphate derivatives. Its substrate specificity is unclear. In vitro, it can use NTP, dNTP, 8-oxo-GTP, 8-oxo-dGTP, dGTP, dATP, dTTP or dihydroneopterin triphosphate (DHNTP) as substrate. Has some NADH pyrophosphatase activity in vitro; however, such activity may not be relevant in vivo due to the high concentration of manganese used during the experiments. Plays an important role in protection against oxidative DNA and RNA damage by removing oxidatively damaged form of guanine. The sequence is that of Nudix hydrolase 1 (NUDT1) from Arabidopsis thaliana (Mouse-ear cress).